The sequence spans 556 residues: MKSDIEIARGAPMRPIKDIASEVGIKDEELELYGDYKAKITFDAWKRLKDKPDGNLILVTAITPTPAGEGKSTTTVGLGQALKRLGKNTMVALREPSLGPSFGVKGGAAGGGYSQVVPMEDINLHFTGDIHAITTAHNLLSAAIDNHIHQGNNLDIDARRINWRRVVDLNDRALRNTVVALGGRGNGFPREDGFDITVASEIMAILCLATDIKDLKERLSKIIIGYTRDRQPVTVADLKMQGSMAVLLKDAIKPNLVQTYENVPAFVHGGPFANIAHGCNSAMATQMGVKMSDYLVTEAGFGADLGAEKFFNIKCRFAGLNPDAAVVVATARALKMHGGVEKDNLKEENLEALEKGFENLEKHMENINKFGVPAVVAVNRFPTDTEKELELLINKCQEKGYRVALSEVFAKGGEGGEEVAKEVLDIIDSKESNFKYLYDVDKSMEEKIETIAKEIYGASDVEFTPTARRNIKQLAQKGLDQVPVCMAKTQFSFSDDPKLLGRPKDFSITVKRVRISAGAGFAVAMTGDIMTMPGLPKQPAAEEIDIDDDGQITGLF.

Residue 65–72 (TPAGEGKS) coordinates ATP.

The protein belongs to the formate--tetrahydrofolate ligase family.

It catalyses the reaction (6S)-5,6,7,8-tetrahydrofolate + formate + ATP = (6R)-10-formyltetrahydrofolate + ADP + phosphate. The protein operates within one-carbon metabolism; tetrahydrofolate interconversion. This Natranaerobius thermophilus (strain ATCC BAA-1301 / DSM 18059 / JW/NM-WN-LF) protein is Formate--tetrahydrofolate ligase.